Consider the following 359-residue polypeptide: Carbamoyl phosphate synthase arginine-specific small chain (359 aa).

The tract at residues 1–168 (MKAYLVLATG…VETFEGNGPH (168 aa)) is CPSase. 3 residues coordinate L-glutamine: Ser-45, Gly-216, and Gly-218. One can recognise a Glutamine amidotransferase type-1 domain in the interval 168–355 (HIVLIDYGFK…IDDVAAKGRE (188 aa)). Catalysis depends on Cys-243, which acts as the Nucleophile. Positions 244, 247, 285, and 288 each coordinate L-glutamine. Catalysis depends on residues His-328 and Glu-330.

This sequence belongs to the CarA family. As to quaternary structure, composed of two chains; the small (or glutamine) chain promotes the hydrolysis of glutamine to ammonia, which is used by the large (or ammonia) chain to synthesize carbamoyl phosphate. Tetramer of heterodimers (alpha,beta)4.

It carries out the reaction hydrogencarbonate + L-glutamine + 2 ATP + H2O = carbamoyl phosphate + L-glutamate + 2 ADP + phosphate + 2 H(+). The catalysed reaction is L-glutamine + H2O = L-glutamate + NH4(+). Its pathway is amino-acid biosynthesis; L-arginine biosynthesis; carbamoyl phosphate from bicarbonate: step 1/1. Functionally, small subunit of the glutamine-dependent carbamoyl phosphate synthetase (CPSase). CPSase catalyzes the formation of carbamoyl phosphate from the ammonia moiety of glutamine, carbonate, and phosphate donated by ATP, constituting the first step of the biosynthetic pathway leading to arginine and/or urea. The small subunit (glutamine amidotransferase) binds and cleaves glutamine to supply the large subunit with the substrate ammonia. The sequence is that of Carbamoyl phosphate synthase arginine-specific small chain from Halalkalibacterium halodurans (strain ATCC BAA-125 / DSM 18197 / FERM 7344 / JCM 9153 / C-125) (Bacillus halodurans).